Consider the following 200-residue polypeptide: Putative TLC domain-containing protein L438 (200 aa).

In terms of domain architecture, TLC spans 1–193 (MDYKQSNLFL…ILKILRAKLF (193 aa)). 6 helical membrane-spanning segments follow: residues 9-29 (FLFP…CGTF), 43-63 (THGI…LMIV), 74-94 (VHHF…YYLI), 96-116 (YLFA…AIKY), 131-151 (LAFF…LWFV), and 165-185 (YLIV…YRIL).

It localises to the membrane. In Acanthamoeba polyphaga mimivirus (APMV), this protein is Putative TLC domain-containing protein L438.